Reading from the N-terminus, the 481-residue chain is ATP synthase subunit beta (481 aa).

167–174 (GGAGVGKT) is an ATP binding site.

It belongs to the ATPase alpha/beta chains family. F-type ATPases have 2 components, CF(1) - the catalytic core - and CF(0) - the membrane proton channel. CF(1) has five subunits: alpha(3), beta(3), gamma(1), delta(1), epsilon(1). CF(0) has three main subunits: a(1), b(2) and c(9-12). The alpha and beta chains form an alternating ring which encloses part of the gamma chain. CF(1) is attached to CF(0) by a central stalk formed by the gamma and epsilon chains, while a peripheral stalk is formed by the delta and b chains.

It is found in the cell membrane. It catalyses the reaction ATP + H2O + 4 H(+)(in) = ADP + phosphate + 5 H(+)(out). Functionally, produces ATP from ADP in the presence of a proton gradient across the membrane. The catalytic sites are hosted primarily by the beta subunits. The polypeptide is ATP synthase subunit beta (Corynebacterium diphtheriae (strain ATCC 700971 / NCTC 13129 / Biotype gravis)).